A 384-amino-acid polypeptide reads, in one-letter code: S-adenosylmethionine synthase (384 aa).

His-15 contributes to the ATP binding site. Asp-17 contacts Mg(2+). Glu-43 contacts K(+). Glu-56 and Gln-99 together coordinate L-methionine. The tract at residues 99–109 is flexible loop; that stretch reads QSPDINQGVDR. ATP is bound by residues 164–166, 231–232, Asp-240, 246–247, Ala-263, and Lys-267; these read DAK, RF, and RK. Residue Asp-240 participates in L-methionine binding. Lys-271 contributes to the L-methionine binding site.

The protein belongs to the AdoMet synthase family. As to quaternary structure, homotetramer; dimer of dimers. Requires Mg(2+) as cofactor. The cofactor is K(+).

The protein resides in the cytoplasm. The catalysed reaction is L-methionine + ATP + H2O = S-adenosyl-L-methionine + phosphate + diphosphate. It participates in amino-acid biosynthesis; S-adenosyl-L-methionine biosynthesis; S-adenosyl-L-methionine from L-methionine: step 1/1. Its function is as follows. Catalyzes the formation of S-adenosylmethionine (AdoMet) from methionine and ATP. The overall synthetic reaction is composed of two sequential steps, AdoMet formation and the subsequent tripolyphosphate hydrolysis which occurs prior to release of AdoMet from the enzyme. This Shewanella woodyi (strain ATCC 51908 / MS32) protein is S-adenosylmethionine synthase.